The sequence spans 123 residues: uncharacterized protein (123 aa).

The segment at 35–100 is disordered; that stretch reads SQDHGDDPAE…SSGAPASQHC (66 aa). Residues 37–48 are compositionally biased toward basic and acidic residues; the sequence is DHGDDPAERGRT. The segment covering 85–97 has biased composition (low complexity); the sequence is ALPASPSSGAPAS.

This is an uncharacterized protein from Homo sapiens (Human).